The chain runs to 808 residues: Sucrose synthase (808 aa).

The segment at 271–753 (MLFRIALISP…GIERVYSTYT (483 aa)) is GT-B glycosyltransferase.

The protein belongs to the glycosyltransferase 1 family. Probably a homotetramer.

The enzyme catalyses an NDP-alpha-D-glucose + D-fructose = a ribonucleoside 5'-diphosphate + sucrose + H(+). It carries out the reaction ADP-alpha-D-glucose + D-fructose = sucrose + ADP + H(+). In terms of biological role, catalyzes the reversible conversion of sucrose and a nucleotide disphosphate (NDP) into fructose and NDP-glucose; although the reaction is freely reversible in vitro, the physiological reaction seems to be sucrose cleavage. Unlike characterized plant enzymes prefers ADP as a cosubstrate, whereas plants prefer UDP. Its preference for ADP over UDP suggests it may directly link sucrose and glycogen metabolism. This Thermosynechococcus vestitus (strain NIES-2133 / IAM M-273 / BP-1) protein is Sucrose synthase.